The sequence spans 946 residues: Serine/threonine-protein kinase PLK4 (946 aa).

The Protein kinase domain maps to 12–265 (FKVLNLLGKG…LSSVLDHAFM (254 aa)). ATP contacts are provided by residues 18 to 26 (LGKGSFACV) and lysine 41. Aspartate 136 (proton acceptor) is an active-site residue. Residues 330-395 (HPAERSNGGS…TYGKPSSFSE (66 aa)) are disordered. The segment covering 378–394 (RSGTSQSQTYGKPSSFS) has biased composition (polar residues). The region spanning 566 to 679 (TLRSIISPLN…AKFIQLVRSK (114 aa)) is the Cryptic POLO box 1 (CPB1) domain. In terms of domain architecture, Cryptic POLO box 2 (CPB2) spans 680 to 792 (MPKVTYYTRY…GRRPAITESP (113 aa)). The interval 789 to 828 (TESPRTQLTVDSARERKDEQSSANRVLHSSATSPPQIPNI) is disordered. The segment covering 809 to 828 (SSANRVLHSSATSPPQIPNI) has biased composition (polar residues). In terms of domain architecture, POLO box spans 864–942 (QVLKSVFVEN…LSSILMLFAS (79 aa)).

The protein belongs to the protein kinase superfamily. Ser/Thr protein kinase family. CDC5/Polo subfamily. Homodimer. In terms of processing, ubiquitinated; leading to its degradation by the proteasome.

The protein localises to the cytoplasm. It is found in the cytoskeleton. It localises to the microtubule organizing center. The protein resides in the centrosome. Its subcellular location is the centriole. It carries out the reaction L-seryl-[protein] + ATP = O-phospho-L-seryl-[protein] + ADP + H(+). It catalyses the reaction L-threonyl-[protein] + ATP = O-phospho-L-threonyl-[protein] + ADP + H(+). Functionally, serine/threonine-protein kinase that plays a central role in centriole duplication. Able to trigger procentriole formation on the surface of the parental centriole cylinder, leading to the recruitment of centriole biogenesis proteins such as sass6, cpap, ccp110, cep135 and gamma-tubulin. When overexpressed, it is able to induce centrosome amplification through the simultaneous generation of multiple procentrioles adjoining each parental centriole during S phase. Its central role in centriole replication suggests a possible role in tumorigenesis, centrosome aberrations being frequently observed in tumors. Also involved in deuterosome-mediated centriole amplification in multiciliated that can generate more than 100 centrioles. This Xenopus tropicalis (Western clawed frog) protein is Serine/threonine-protein kinase PLK4.